Here is a 784-residue protein sequence, read N- to C-terminus: Ribosome biogenesis protein BOP1 homolog (784 aa).

Over residues methionine 1–glycine 11 the composition is skewed to basic residues. Residues methionine 1–isoleucine 159 are disordered. Acidic residues-rich tracts occupy residues serine 27–leucine 36, glutamate 45–aspartate 54, serine 62–glycine 73, and alanine 84–glutamate 111. Residues lysine 112–proline 123 show a composition bias toward basic and acidic residues. Low complexity predominate over residues serine 124 to alanine 133. Positions leucine 138–tyrosine 148 are enriched in basic and acidic residues. Residues glutamine 149–aspartate 158 are compositionally biased toward acidic residues. WD repeat units follow at residues glycine 445–glutamate 486, aspartate 488–valine 526, threonine 570–proline 612, lysine 615–lysine 653, threonine 656–glutamine 695, leucine 699–glutamine 738, and arginine 754–threonine 784.

The protein belongs to the WD repeat BOP1/ERB1 family.

It is found in the nucleus. The protein resides in the nucleolus. The protein localises to the nucleoplasm. Required for maturation of ribosomal RNAs and formation of the large ribosomal subunit. The protein is Ribosome biogenesis protein BOP1 homolog of Drosophila yakuba (Fruit fly).